The primary structure comprises 230 residues: MREERPIIALDFPSFDDVKDFLEHFPEDEKLYVKIGMEFFYAIGPEIVHYLKGLGHSIFLDLKLHDIPNTVRSAMSVLGTFGIDMVTVHAAGGVEMMSEAKKVLGDKAKLVAVTQLTSTSEEDMRDCQNIQTTVQESVVNYARKAKEAGLDGVVCSAQEVELIKAATADDFLCVTPGIRPAGSEIGDQKRVMTPQEAHQIGSDYIVVGRPIIQAENPWDAYHEIKKQWNS.

Substrate contacts are provided by residues D11, K34, 61–70 (DLKLHDIPNT), T117, R179, Q188, G208, and R209. The active-site Proton donor is the K63.

Belongs to the OMP decarboxylase family. Type 1 subfamily. As to quaternary structure, homodimer.

The enzyme catalyses orotidine 5'-phosphate + H(+) = UMP + CO2. It participates in pyrimidine metabolism; UMP biosynthesis via de novo pathway; UMP from orotate: step 2/2. In terms of biological role, catalyzes the decarboxylation of orotidine 5'-monophosphate (OMP) to uridine 5'-monophosphate (UMP). The chain is Orotidine 5'-phosphate decarboxylase from Streptococcus sanguinis (strain SK36).